The sequence spans 182 residues: ATP-dependent protease subunit HslV (182 aa).

Thr-10 is an active-site residue. Na(+) contacts are provided by Ala-164, Cys-167, and Thr-170.

This sequence belongs to the peptidase T1B family. HslV subfamily. In terms of assembly, a double ring-shaped homohexamer of HslV is capped on each side by a ring-shaped HslU homohexamer. The assembly of the HslU/HslV complex is dependent on binding of ATP.

Its subcellular location is the cytoplasm. The catalysed reaction is ATP-dependent cleavage of peptide bonds with broad specificity.. Allosterically activated by HslU binding. Its function is as follows. Protease subunit of a proteasome-like degradation complex believed to be a general protein degrading machinery. The polypeptide is ATP-dependent protease subunit HslV (Chelativorans sp. (strain BNC1)).